A 337-amino-acid chain; its full sequence is HTH-type transcriptional repressor PurR (337 aa).

Positions alanine 2–cysteine 56 constitute an HTH lacI-type domain. Residues isoleucine 4 to asparagine 23 constitute a DNA-binding region (H-T-H motif). Residues serine 48–cysteine 56 mediate DNA binding. Residues phenylalanine 73, lysine 189, threonine 191, phenylalanine 220, and aspartate 276 each contribute to the hypoxanthine site.

Homodimer.

It participates in purine metabolism; purine nucleotide biosynthesis [regulation]. Its function is as follows. Is the main repressor of the genes involved in the de novo synthesis of purine nucleotides, regulating purB, purC, purEK, purF, purHD, purL, purMN and guaBA expression. PurR is allosterically activated to bind its cognate DNA by binding the purine corepressors, hypoxanthine or guanine, thereby effecting transcription repression. This Aliivibrio fischeri (strain ATCC 700601 / ES114) (Vibrio fischeri) protein is HTH-type transcriptional repressor PurR.